The primary structure comprises 148 residues: Protein GLUTAMINE DUMPER 3 (148 aa).

A disordered region spans residues 1–24 (MEGRQYYPPRENVEGNRTTMGGGP). The Extracellular portion of the chain corresponds to 1–34 (MEGRQYYPPRENVEGNRTTMGGGPHSPWHSPVPY). A helical transmembrane segment spans residues 35–55 (LFGGLAAMLGLIAFALLILAC). Residues 56-148 (SYWRLSGYLD…RSSESNGETH (93 aa)) lie on the Cytoplasmic side of the membrane. The VIMAG signature appears at 99–103 (VIMAG). Acidic residues predominate over residues 120–132 (CDDDDDEDDDVEG). A disordered region spans residues 120 to 148 (CDDDDDEDDDVEGSDQVVPRSSESNGETH). Polar residues predominate over residues 138-148 (PRSSESNGETH).

Belongs to the GLUTAMINE DUMPER 1 (TC 9.B.60) family. In terms of tissue distribution, expressed in the vascular tissues. Also detected in anthers.

It is found in the membrane. Its function is as follows. Probable subunit of an amino acid transporter involved in the regulation of the amino acid metabolism. Stimulates amino acid export by activating nonselective amino acid facilitators. Acts upstream genes involved in the salicylic acid (SA) pathway and in the geminivirus-host interaction. The sequence is that of Protein GLUTAMINE DUMPER 3 (GDU3) from Arabidopsis thaliana (Mouse-ear cress).